The following is a 430-amino-acid chain: UDP-glucuronate 4-epimerase 3 (430 aa).

The next 2 membrane-spanning stretches (helical) occupy residues 29-49 and 90-110; these read SVAK…IFFY and GFSV…SAAL. An NAD(+)-binding site is contributed by 92-123; that stretch reads SVLVTGAAGFVGTHVSAALKRRGDGVLGLDNF. Tyrosine 242 (proton acceptor) is an active-site residue.

Belongs to the NAD(P)-dependent epimerase/dehydratase family. As to quaternary structure, homodimer. As to expression, in roots, leaves, siliques, flowers, pollen and stems.

The protein resides in the golgi apparatus. The protein localises to the golgi stack membrane. The enzyme catalyses UDP-alpha-D-glucuronate = UDP-alpha-D-galacturonate. Involved in the synthesis of the negatively charged monosaccharide that forms the backbone of pectic cell wall components. The sequence is that of UDP-glucuronate 4-epimerase 3 (GAE3) from Arabidopsis thaliana (Mouse-ear cress).